A 152-amino-acid chain; its full sequence is uncharacterized protein (152 aa).

Residues 1–5 (MWFPQ) lie on the Cytoplasmic side of the membrane. A helical transmembrane segment spans residues 6 to 26 (IIAGMAAGGAASAMTPGKVLF). The Extracellular portion of the chain corresponds to 27 to 38 (TNALGLGCSRSR). A helical membrane pass occupies residues 39–59 (GLFLEMFGTAVLCFTVLMTAV). The Cytoplasmic portion of the chain corresponds to 60-65 (EKRETN). Residues 66-86 (FMAALPIGISLFMAHMALTGY) traverse the membrane as a helical segment. At 87-110 (TGTGVNPARSLGAAVAARYFPHYH) the chain is on the extracellular side. Positions 92–94 (NPA) match the NPA motif. Residues 111-131 (WIYWISPLLGAFLAWSVWQLL) traverse the membrane as a helical segment. Over 132–152 (QILDYTTYVNAEKAAGQKKED) the chain is Cytoplasmic.

This sequence belongs to the MIP/aquaporin (TC 1.A.8) family.

The protein localises to the membrane. This is an uncharacterized protein from Saccharomyces cerevisiae (strain YJM789) (Baker's yeast).